The chain runs to 162 residues: Regulator of sigma D (162 aa).

It belongs to the Rsd/AlgQ family. As to quaternary structure, interacts with RpoD.

Its subcellular location is the cytoplasm. Functionally, binds RpoD and negatively regulates RpoD-mediated transcription activation by preventing the interaction between the primary sigma factor RpoD with the catalytic core of the RNA polymerase and with promoter DNA. May be involved in replacement of the RNA polymerase sigma subunit from RpoD to RpoS during the transition from exponential growth to the stationary phase. This chain is Regulator of sigma D, found in Salmonella agona (strain SL483).